We begin with the raw amino-acid sequence, 108 residues long: Ig kappa chain V-VI region NQ2-6.1 (108 aa).

The interval 1–23 (QILLTQSPAIMSASPGQKVTMTC) is framework-1. A disulfide bridge links C23 with C87. The interval 24-33 (SASSSVSYMY) is complementarity-determining-1. The interval 34-48 (WYQQKPGSSPRLLIY) is framework-2. The complementarity-determining-2 stretch occupies residues 49 to 55 (DTSNLAS). The framework-3 stretch occupies residues 56–87 (GVPVRFSGSGSATSYSLTITRMQAEDAATYYC). The complementarity-determining-3 stretch occupies residues 88–98 (QQWSSYPPMLT). The segment at 99–108 (FGAGTKLELK) is framework-4.

In Mus musculus (Mouse), this protein is Ig kappa chain V-VI region NQ2-6.1.